The primary structure comprises 190 residues: Ribose 1,5-bisphosphate phosphokinase PhnN (190 aa).

An ATP-binding site is contributed by 10–17; it reads GPSGSGKD.

The protein belongs to the ribose 1,5-bisphosphokinase family.

It carries out the reaction alpha-D-ribose 1,5-bisphosphate + ATP = 5-phospho-alpha-D-ribose 1-diphosphate + ADP. Its pathway is metabolic intermediate biosynthesis; 5-phospho-alpha-D-ribose 1-diphosphate biosynthesis; 5-phospho-alpha-D-ribose 1-diphosphate from D-ribose 5-phosphate (route II): step 3/3. Functionally, catalyzes the phosphorylation of ribose 1,5-bisphosphate to 5-phospho-D-ribosyl alpha-1-diphosphate (PRPP). The sequence is that of Ribose 1,5-bisphosphate phosphokinase PhnN from Pseudomonas fluorescens (strain SBW25).